A 356-amino-acid polypeptide reads, in one-letter code: UDP-N-acetylglucosamine--N-acetylmuramyl-(pentapeptide) pyrophosphoryl-undecaprenol N-acetylglucosamine transferase (356 aa).

3 residues coordinate UDP-N-acetyl-alpha-D-glucosamine: Arg-166, Ser-196, and Gln-290.

This sequence belongs to the glycosyltransferase 28 family. MurG subfamily.

The protein resides in the cell membrane. It catalyses the reaction Mur2Ac(oyl-L-Ala-gamma-D-Glu-L-Lys-D-Ala-D-Ala)-di-trans,octa-cis-undecaprenyl diphosphate + UDP-N-acetyl-alpha-D-glucosamine = beta-D-GlcNAc-(1-&gt;4)-Mur2Ac(oyl-L-Ala-gamma-D-Glu-L-Lys-D-Ala-D-Ala)-di-trans,octa-cis-undecaprenyl diphosphate + UDP + H(+). It participates in cell wall biogenesis; peptidoglycan biosynthesis. In terms of biological role, cell wall formation. Catalyzes the transfer of a GlcNAc subunit on undecaprenyl-pyrophosphoryl-MurNAc-pentapeptide (lipid intermediate I) to form undecaprenyl-pyrophosphoryl-MurNAc-(pentapeptide)GlcNAc (lipid intermediate II). This Staphylococcus aureus (strain Mu3 / ATCC 700698) protein is UDP-N-acetylglucosamine--N-acetylmuramyl-(pentapeptide) pyrophosphoryl-undecaprenol N-acetylglucosamine transferase.